Here is a 176-residue protein sequence, read N- to C-terminus: MESQIRQNYHHDCERAINRMINMEMFASYTYTSMAFYFSRDDVALPGFAHFFKENSEEEREHADKLLSFQNKRGGRILLQDIKKPERDEWGNGLEAMQCALQLEKNVNQALLDLHKIASDKVDPHLCDFLETHYLNEQVEAIKKLGDHITNLTKMDAVKNKMAEYLFDKHTLGGQS.

Positions 7 to 156 (QNYHHDCERA…DHITNLTKMD (150 aa)) constitute a Ferritin-like diiron domain. Fe cation contacts are provided by glutamate 24, glutamate 59, histidine 62, glutamate 104, and glutamine 138.

This sequence belongs to the ferritin family. As to quaternary structure, oligomer of 24 subunits. There are at least two types of subunits. The functional molecule forms a roughly spherical shell with a diameter of 12 nm and contains a central cavity into which the insoluble mineral iron core is deposited. Almost exclusively in the gonads.

It carries out the reaction 4 Fe(2+) + O2 + 4 H(+) = 4 Fe(3+) + 2 H2O. Functionally, stores iron in a soluble, non-toxic, readily available form. Important for iron homeostasis. Has ferroxidase activity. Iron is taken up in the ferrous form and deposited as ferric hydroxides after oxidation. The sequence is that of Ferritin, middle subunit from Salmo salar (Atlantic salmon).